We begin with the raw amino-acid sequence, 321 residues long: tRNA-dihydrouridine synthase B (321 aa).

FMN-binding positions include 16-18 and Q70; that span reads PMA. Residue C100 is the Proton donor of the active site. FMN-binding positions include K139, 200–202, and 224–225; these read NGD and GR.

Belongs to the Dus family. DusB subfamily. Requires FMN as cofactor.

It catalyses the reaction a 5,6-dihydrouridine in tRNA + NAD(+) = a uridine in tRNA + NADH + H(+). The enzyme catalyses a 5,6-dihydrouridine in tRNA + NADP(+) = a uridine in tRNA + NADPH + H(+). In terms of biological role, catalyzes the synthesis of 5,6-dihydrouridine (D), a modified base found in the D-loop of most tRNAs, via the reduction of the C5-C6 double bond in target uridines. The polypeptide is tRNA-dihydrouridine synthase B (Escherichia coli O157:H7).